A 116-amino-acid polypeptide reads, in one-letter code: Putative pterin-4-alpha-carbinolamine dehydratase (116 aa).

It belongs to the pterin-4-alpha-carbinolamine dehydratase family.

The catalysed reaction is (4aS,6R)-4a-hydroxy-L-erythro-5,6,7,8-tetrahydrobiopterin = (6R)-L-erythro-6,7-dihydrobiopterin + H2O. The sequence is that of Putative pterin-4-alpha-carbinolamine dehydratase from Xylella fastidiosa (strain M12).